Here is a 273-residue protein sequence, read N- to C-terminus: Flagellin FljK (273 aa).

Belongs to the bacterial flagellin family. In terms of assembly, in C.crescentus, the flagellar filament is composed of multiple flagellins of 29 kDa; 27 kDa and 25 kDa.

The protein resides in the secreted. It is found in the bacterial flagellum. Its function is as follows. Flagellin is the subunit protein which polymerizes to form the filaments of bacterial flagella. The polypeptide is Flagellin FljK (fljK) (Caulobacter vibrioides (strain ATCC 19089 / CIP 103742 / CB 15) (Caulobacter crescentus)).